The following is a 727-amino-acid chain: Fatty acid oxidation complex subunit alpha (727 aa).

Positions 1–200 (MNDQQPFSAI…RQGLVDEAVP (200 aa)) are enoyl-CoA hydratase. The segment at 316–727 (KPIHYVGILG…PPTDEDDSAS (412 aa)) is 3-hydroxyacyl-CoA dehydrogenase.

It in the N-terminal section; belongs to the enoyl-CoA hydratase/isomerase family. In the central section; belongs to the 3-hydroxyacyl-CoA dehydrogenase family. As to quaternary structure, heterotetramer of two alpha chains (FadJ) and two beta chains (FadI).

It is found in the cytoplasm. It carries out the reaction a (3S)-3-hydroxyacyl-CoA = a (2E)-enoyl-CoA + H2O. The enzyme catalyses a 4-saturated-(3S)-3-hydroxyacyl-CoA = a (3E)-enoyl-CoA + H2O. The catalysed reaction is a (3S)-3-hydroxyacyl-CoA + NAD(+) = a 3-oxoacyl-CoA + NADH + H(+). It catalyses the reaction (3S)-3-hydroxybutanoyl-CoA = (3R)-3-hydroxybutanoyl-CoA. The protein operates within lipid metabolism; fatty acid beta-oxidation. Functionally, catalyzes the formation of a hydroxyacyl-CoA by addition of water on enoyl-CoA. Also exhibits 3-hydroxyacyl-CoA epimerase and 3-hydroxyacyl-CoA dehydrogenase activities. The sequence is that of Fatty acid oxidation complex subunit alpha from Pectobacterium carotovorum subsp. carotovorum (strain PC1).